Consider the following 206-residue polypeptide: Macrophage immunometabolism regulator (206 aa).

This sequence belongs to the UNC119-binding protein family. In terms of assembly, interacts with unc119 family proteins; interaction preferentially takes place when unc119 proteins are unliganded with myristoylated proteins.

It localises to the cytoplasm. The protein localises to the cell projection. It is found in the cilium. Its function is as follows. May play a role in immune regulation through regulation of the macrophage function. Involved in the recruitment of macrophages in response to injury. May also play a role in trafficking of proteins via its interaction with unc119 family cargo adapters. May play a role in ciliary membrane localization. Functionally, regulates the macrophage function, by enhancing the resolution of inflammation and wound repair functions mediated by M2 macrophages. The regulation of macrophage function is, due at least in part, to the role of C5orf30 in regulating ability to inhibit glycolysis. Probably plays alaso a role in trafficking of proteins via its interaction with UNC119 and UNC119B cargo adapters: may help the release of UNC119 and UNC119B cargo or the recycling of UNC119 and UNC119B. May play a role in ciliary membrane localization via its interaction with UNC119B and protein transport into photoreceptor cells. The chain is Macrophage immunometabolism regulator (macir) from Danio rerio (Zebrafish).